A 246-amino-acid polypeptide reads, in one-letter code: Ribosomal RNA small subunit methyltransferase J (246 aa).

S-adenosyl-L-methionine-binding positions include 115-116 (ER) and aspartate 169.

This sequence belongs to the methyltransferase superfamily. RsmJ family.

The protein localises to the cytoplasm. It carries out the reaction guanosine(1516) in 16S rRNA + S-adenosyl-L-methionine = N(2)-methylguanosine(1516) in 16S rRNA + S-adenosyl-L-homocysteine + H(+). Its function is as follows. Specifically methylates the guanosine in position 1516 of 16S rRNA. The chain is Ribosomal RNA small subunit methyltransferase J from Buchnera aphidicola subsp. Acyrthosiphon pisum (strain Tuc7).